Here is a 635-residue protein sequence, read N- to C-terminus: DNA mismatch repair protein MutL (635 aa).

The interval 352–380 (KAALQRGWVPPGAGRPGEGGGRAAPPPWR) is disordered.

Belongs to the DNA mismatch repair MutL/HexB family.

Functionally, this protein is involved in the repair of mismatches in DNA. It is required for dam-dependent methyl-directed DNA mismatch repair. May act as a 'molecular matchmaker', a protein that promotes the formation of a stable complex between two or more DNA-binding proteins in an ATP-dependent manner without itself being part of a final effector complex. This chain is DNA mismatch repair protein MutL, found in Symbiobacterium thermophilum (strain DSM 24528 / JCM 14929 / IAM 14863 / T).